A 953-amino-acid polypeptide reads, in one-letter code: Zinc finger protein 507 (953 aa).

Serine 95 bears the Phosphoserine mark. 3 consecutive C2H2-type zinc fingers follow at residues 125–147 (YQCSLCKFLSSSFSVLKDHIKQH), 155–185 (LMCSECHITSRSQEELEAHVVNDHDNDANIH), and 248–270 (YRCLFCSYTCGQQRMLKTHAWKH). A Phosphoserine modification is found at serine 427. The segment at 470–489 (KGLATDENAPPGRRRTNSES) is disordered. C2H2-type zinc fingers lie at residues 641–663 (YRCRLCHYTSGNKGYIKQHLRVH), 669–691 (YQCPICEHIADNSKDLESHMIHH), 697–720 (YQCKQCEESFHYKSQLRNHEREQH), 758–780 (YRCDVCDYTSTTYVGVRNHRRIH), and 786–808 (YRCSLCGYVCSHPPSLKSHMWKH). Residues 831–888 (GRVLGKSPGKTQLKSSEESADPVTGSSENAVSSSELMSQTPSEVLGTNENEKLSPTSN) are disordered. Polar residues predominate over residues 854-888 (TGSSENAVSSSELMSQTPSEVLGTNENEKLSPTSN). A C2H2-type 9 zinc finger spans residues 911 to 933 (FCCCICGFESTSKENLLDHMKEH).

It belongs to the krueppel C2H2-type zinc-finger protein family.

It localises to the nucleus. Its function is as follows. May be involved in transcriptional regulation. The sequence is that of Zinc finger protein 507 (ZNF507) from Homo sapiens (Human).